The chain runs to 672 residues: NADPH-Fe(3+) oxidoreductase subunit beta (672 aa).

[4Fe-4S] cluster-binding residues include Cys-203, Cys-207, Cys-211, and Cys-215. Residue 254-283 (KKVAIVGAGPAGLACAYYLALEGYPCTIYE) coordinates FAD. Residue 388–421 (GKKVVVVGGGNTAIDCVRVALREGAEESTLLYRR) coordinates NADP(+). An FAD-binding site is contributed by 552–562 (TDLEGVFAGGD).

As to quaternary structure, heterotetramer with 2 alpha subunits. It depends on [4Fe-4S] cluster as a cofactor. Requires FAD as cofactor.

Its subcellular location is the cell membrane. Functionally, probably involved in acetate metabolism and not in the reduction of Fe(3+) chelates. May serve as a major route for NADP regeneration. The sequence is that of NADPH-Fe(3+) oxidoreductase subunit beta (sfrB) from Geobacter sulfurreducens (strain DL-1 / KN400).